The primary structure comprises 498 residues: Protein translocase subunit SecY (498 aa).

The next 10 helical transmembrane spans lie at 23-43 (FVIS…ISVI), 65-87 (FDLF…VGIS), 124-144 (ITRF…IALI), 163-183 (AFYI…GDII), 191-211 (GITL…FIVM), 229-249 (AINF…ISFV), 281-301 (AAGV…ITIA), 322-342 (PVGI…YSYI), 382-402 (FIGA…SLVL), and 406-426 (TTLS…MELY). Over residues 478–488 (VEPTQDKKKNP) the composition is skewed to basic and acidic residues. Residues 478 to 498 (VEPTQDKKKNPSDPLEVSQLW) form a disordered region.

It belongs to the SecY/SEC61-alpha family. In terms of assembly, component of the Sec protein translocase complex. Heterotrimer consisting of SecY, SecE and SecG subunits. The heterotrimers can form oligomers, although 1 heterotrimer is thought to be able to translocate proteins. Interacts with the ribosome. Interacts with SecDF, and other proteins may be involved. Interacts with SecA.

Its subcellular location is the cell membrane. The central subunit of the protein translocation channel SecYEG. Consists of two halves formed by TMs 1-5 and 6-10. These two domains form a lateral gate at the front which open onto the bilayer between TMs 2 and 7, and are clamped together by SecE at the back. The channel is closed by both a pore ring composed of hydrophobic SecY resides and a short helix (helix 2A) on the extracellular side of the membrane which forms a plug. The plug probably moves laterally to allow the channel to open. The ring and the pore may move independently. The polypeptide is Protein translocase subunit SecY (Mycoplasmoides gallisepticum (strain R(low / passage 15 / clone 2)) (Mycoplasma gallisepticum)).